We begin with the raw amino-acid sequence, 260 residues long: Cytochrome c oxidase subunit 3 (260 aa).

A run of 6 helical transmembrane segments spans residues 41-61 (LTLVGFLLLITNMVNWWRDII), 81-101 (GMILFITSEVCFFFAFFWAFF), 133-153 (TGVLLSSGVTLSWSHHSILAG), 161-181 (ALFLTVALGSYFTALQAWEYI), 196-216 (FFVATGFHGLQVIIGTTFLMV), and 238-258 (AWYWHFVDVVWFVLYWLIYWW).

Belongs to the cytochrome c oxidase subunit 3 family. In terms of assembly, component of the cytochrome c oxidase (complex IV, CIV), a multisubunit enzyme composed of a catalytic core of 3 subunits and several supernumerary subunits. The complex exists as a monomer or a dimer and forms supercomplexes (SCs) in the inner mitochondrial membrane with ubiquinol-cytochrome c oxidoreductase (cytochrome b-c1 complex, complex III, CIII).

Its subcellular location is the mitochondrion inner membrane. It catalyses the reaction 4 Fe(II)-[cytochrome c] + O2 + 8 H(+)(in) = 4 Fe(III)-[cytochrome c] + 2 H2O + 4 H(+)(out). Its function is as follows. Component of the cytochrome c oxidase, the last enzyme in the mitochondrial electron transport chain which drives oxidative phosphorylation. The respiratory chain contains 3 multisubunit complexes succinate dehydrogenase (complex II, CII), ubiquinol-cytochrome c oxidoreductase (cytochrome b-c1 complex, complex III, CIII) and cytochrome c oxidase (complex IV, CIV), that cooperate to transfer electrons derived from NADH and succinate to molecular oxygen, creating an electrochemical gradient over the inner membrane that drives transmembrane transport and the ATP synthase. Cytochrome c oxidase is the component of the respiratory chain that catalyzes the reduction of oxygen to water. Electrons originating from reduced cytochrome c in the intermembrane space (IMS) are transferred via the dinuclear copper A center (CU(A)) of subunit 2 and heme A of subunit 1 to the active site in subunit 1, a binuclear center (BNC) formed by heme A3 and copper B (CU(B)). The BNC reduces molecular oxygen to 2 water molecules using 4 electrons from cytochrome c in the IMS and 4 protons from the mitochondrial matrix. In Strongylocentrotus purpuratus (Purple sea urchin), this protein is Cytochrome c oxidase subunit 3 (COIII).